The following is a 325-amino-acid chain: MRRYSRIIGTGSYLPPRRLTNADLVAELGQRGIETSDEWIVERTGIRARHFAAPDVSSSDLALQAARLALQAAGLQATDIDLIIVATSTPDMVFPAAACILQNKLGANGCPAFDLQAVCSGFVYALSVADSMVRAGAANCALVVGAEVFSRILDFNDRTTCVLFGDGAGAVVLQASATPGILCSDLKADGKHVGILCVPGNVSGGQVLGDPVLKMDGQAVFKLAIGVLEQAAHAVLAKAGLKPADVDWLIPHQANIRIMQGTARRLKMGMDKMVVTLDQHGNTSAASIPLALDHAVRMGRVKPGQTLLLQAVGGGFTWGAVLLKL.

Catalysis depends on residues Cys-119 and His-252. An ACP-binding region spans residues 253 to 257 (QANIR). Asn-282 is an active-site residue.

It belongs to the thiolase-like superfamily. FabH family. In terms of assembly, homodimer.

Its subcellular location is the cytoplasm. The enzyme catalyses malonyl-[ACP] + acetyl-CoA + H(+) = 3-oxobutanoyl-[ACP] + CO2 + CoA. It participates in lipid metabolism; fatty acid biosynthesis. In terms of biological role, catalyzes the condensation reaction of fatty acid synthesis by the addition to an acyl acceptor of two carbons from malonyl-ACP. Catalyzes the first condensation reaction which initiates fatty acid synthesis and may therefore play a role in governing the total rate of fatty acid production. Possesses both acetoacetyl-ACP synthase and acetyl transacylase activities. Its substrate specificity determines the biosynthesis of branched-chain and/or straight-chain of fatty acids. The chain is Beta-ketoacyl-[acyl-carrier-protein] synthase III from Verminephrobacter eiseniae (strain EF01-2).